We begin with the raw amino-acid sequence, 286 residues long: PTS system mannose-specific EIID component (286 aa).

At M1 the chain carries N-formylmethionine. Topologically, residues 1–17 are cytoplasmic; it reads MSEMVDTTQTTTEKKLT. In terms of domain architecture, PTS EIID spans 14–284; it reads KKLTQSDIRG…GIAGYACGLL (271 aa). The stretch at 18-55 is an intramembrane region; the sequence is QSDIRGVFLRSNLFQGSWNFERMQALGFCFSMVPAIRR. Over 56-62 the chain is Cytoplasmic; that stretch reads LYPENNE. An intramembrane segment occupies 63–95; that stretch reads ARKQAIRRHLEFFNTQPFVAAPILGVTLALEEQ. At 96–103 the chain is on the cytoplasmic side; that stretch reads RANGAEID. The hydrophobic stretch at 104-143 threads the membrane; sequence DGAINGIKVGLMGPLAGVGDPIFWGTVRPVFAALGAGIAM. Over 144–147 the chain is Periplasmic; the sequence is SGSL. The chain crosses the lipid bilayer at residues 148–176; the sequence is LGPLLFFILFNLVRLATRYYGVAYGYSKG. Residues 177 to 186 are Cytoplasmic-facing; sequence IDIVKDMGGG. At 187–212 the chain is embedded in the membrane; it reads FLQKLTEGASILGLFVMGALVNKWTH. Residues 213–244 are Periplasmic-facing; sequence VNIPLVVSRITDQTGKEHVTTVQTILDQLMPG. Over 245–258 the chain traverses the membrane; the sequence is LVPLLLTFACMWLL. Over 259 to 264 the chain is Cytoplasmic; that stretch reads RKKVNP. At 265–283 the chain is embedded in the membrane; sequence LWIIVGFFVIGIAGYACGL. The Periplasmic portion of the chain corresponds to 284–286; it reads LGL.

In terms of assembly, homotrimer of protomers that are composed of two subunits, IIC and IID.

The protein resides in the cell inner membrane. Its function is as follows. The phosphoenolpyruvate-dependent sugar phosphotransferase system (sugar PTS), a major carbohydrate active transport system, catalyzes the phosphorylation of incoming sugar substrates concomitantly with their translocation across the cell membrane. The enzyme II ManXYZ PTS system is involved in mannose transport. This chain is PTS system mannose-specific EIID component (manZ), found in Escherichia coli O6:H1 (strain CFT073 / ATCC 700928 / UPEC).